An 80-amino-acid polypeptide reads, in one-letter code: Serine protease inhibitor Kazal-type 6 (80 aa).

Residues 1–23 (MKTSGVFLLLSLALFCFFSGVFG) form the signal peptide. Position 24 is a pyrrolidone carboxylic acid (Q24). A Kazal-like domain is found at 24–80 (QGAQVDCAEFKDPKVYCTRESNPHCGSDGQTYGNKCAFCKAVMKSGGKINLKHRGKC). 3 disulfide bridges follow: C30/C62, C40/C59, and C48/C80.

Seminal plasma.

It is found in the secreted. In terms of biological role, serine protease inhibitor selective for kallikreins. Efficiently inhibits KLK4, KLK5, KLK6, KLK7, KLK12, KLK13 and KLK14. Doesn't inhibit KLK8. Inhibits acrosin, trypsin, and chymotrypsin. The polypeptide is Serine protease inhibitor Kazal-type 6 (SPINK6) (Bos taurus (Bovine)).